Here is a 511-residue protein sequence, read N- to C-terminus: MLHLMIKPGQLSLKQLRQVSRSPVVLSLDPEAIPAIAESAQVVEQVISEGRTVYGINTGFGLLANTKIAPQDLETLQKSIVLSHAAGIGELMSDETVRLMMLLKINSLARGYSGIRLEVIQALIELVNNQIYPCVPKKGSVGASGDLAPLAHMSTVLLGEGQARYNGKIISGLEAMKIAGLEPITLAPKEGLALLNGTQASTAFALEGLFVAEDLFASATVCGAMSVEAALGSRRPFDPRIHRVRGHRTQMDAATAYRHLLDVSSEIGQSHSNCEKVQDPYSLRCQPQVMGACLQQIRSAAEVLEVEANSVSDNPLVFAEDGDIISGGNFHAEPVAMAADNLALAIAEIGSLSERRMALLIDSALSKLPPFLVDNGGVNSGFMIAQVTAAALASENKTLAHPASVDSLPTSANQEDHVSMATFAARRLRDMGENTRGILAVEYLAAAQGLDFRAPLKSSPRIEEARQILREKVPFYDKDRYFAPDIEKANALLQLAVHNRLMPDQLLPSQH.

Residues 143 to 145 (ASG) constitute a cross-link (5-imidazolinone (Ala-Gly)). Residue S144 is modified to 2,3-didehydroalanine (Ser).

It belongs to the PAL/histidase family. Contains an active site 4-methylidene-imidazol-5-one (MIO), which is formed autocatalytically by cyclization and dehydration of residues Ala-Ser-Gly.

It localises to the cytoplasm. It catalyses the reaction L-histidine = trans-urocanate + NH4(+). It participates in amino-acid degradation; L-histidine degradation into L-glutamate; N-formimidoyl-L-glutamate from L-histidine: step 1/3. The polypeptide is Histidine ammonia-lyase (Vibrio cholerae serotype O1 (strain ATCC 39315 / El Tor Inaba N16961)).